Consider the following 201-residue polypeptide: 3-isopropylmalate dehydratase small subunit (201 aa).

This sequence belongs to the LeuD family. LeuD type 1 subfamily. As to quaternary structure, heterodimer of LeuC and LeuD.

It carries out the reaction (2R,3S)-3-isopropylmalate = (2S)-2-isopropylmalate. The protein operates within amino-acid biosynthesis; L-leucine biosynthesis; L-leucine from 3-methyl-2-oxobutanoate: step 2/4. Functionally, catalyzes the isomerization between 2-isopropylmalate and 3-isopropylmalate, via the formation of 2-isopropylmaleate. The chain is 3-isopropylmalate dehydratase small subunit from Shewanella baltica (strain OS223).